A 341-amino-acid chain; its full sequence is UDP-3-O-acylglucosamine N-acyltransferase 2 (341 aa).

Residue His254 is the Proton acceptor of the active site.

Belongs to the transferase hexapeptide repeat family. LpxD subfamily. As to quaternary structure, homotrimer.

The enzyme catalyses a UDP-3-O-[(3R)-3-hydroxyacyl]-alpha-D-glucosamine + a (3R)-hydroxyacyl-[ACP] = a UDP-2-N,3-O-bis[(3R)-3-hydroxyacyl]-alpha-D-glucosamine + holo-[ACP] + H(+). The protein operates within bacterial outer membrane biogenesis; LPS lipid A biosynthesis. In terms of biological role, catalyzes the N-acylation of UDP-3-O-acylglucosamine using 3-hydroxyacyl-ACP as the acyl donor. Is involved in the biosynthesis of lipid A, a phosphorylated glycolipid that anchors the lipopolysaccharide to the outer membrane of the cell. The sequence is that of UDP-3-O-acylglucosamine N-acyltransferase 2 from Nitrobacter winogradskyi (strain ATCC 25391 / DSM 10237 / CIP 104748 / NCIMB 11846 / Nb-255).